A 340-amino-acid chain; its full sequence is Aspartate-semialdehyde dehydrogenase (340 aa).

Residues T11–V14 and R39–S40 contribute to the NADP(+) site. R100 is a phosphate binding site. The active-site Acyl-thioester intermediate is C131. Q158 serves as a coordination point for substrate. NADP(+) is bound at residue S161–G162. K216 contributes to the phosphate binding site. R238 contributes to the substrate binding site. The Proton acceptor role is filled by H245. NADP(+) is bound at residue N318.

It belongs to the aspartate-semialdehyde dehydrogenase family. As to quaternary structure, homodimer.

It catalyses the reaction L-aspartate 4-semialdehyde + phosphate + NADP(+) = 4-phospho-L-aspartate + NADPH + H(+). Its pathway is amino-acid biosynthesis; L-lysine biosynthesis via DAP pathway; (S)-tetrahydrodipicolinate from L-aspartate: step 2/4. It functions in the pathway amino-acid biosynthesis; L-methionine biosynthesis via de novo pathway; L-homoserine from L-aspartate: step 2/3. It participates in amino-acid biosynthesis; L-threonine biosynthesis; L-threonine from L-aspartate: step 2/5. Functionally, catalyzes the NADPH-dependent formation of L-aspartate-semialdehyde (L-ASA) by the reductive dephosphorylation of L-aspartyl-4-phosphate. In Aquifex aeolicus (strain VF5), this protein is Aspartate-semialdehyde dehydrogenase.